Here is a 474-residue protein sequence, read N- to C-terminus: Adenosylhomocysteinase (474 aa).

Substrate-binding residues include T61, D136, and E196. 197-199 (TTT) contacts NAD(+). K226 and D230 together coordinate substrate. NAD(+)-binding positions include N231, 260 to 265 (GYGDVG), E283, N318, 339 to 341 (IGH), and N384.

The protein belongs to the adenosylhomocysteinase family. The cofactor is NAD(+).

It localises to the cytoplasm. The catalysed reaction is S-adenosyl-L-homocysteine + H2O = L-homocysteine + adenosine. It participates in amino-acid biosynthesis; L-homocysteine biosynthesis; L-homocysteine from S-adenosyl-L-homocysteine: step 1/1. In terms of biological role, may play a key role in the regulation of the intracellular concentration of adenosylhomocysteine. This Ralstonia nicotianae (strain ATCC BAA-1114 / GMI1000) (Ralstonia solanacearum) protein is Adenosylhomocysteinase.